The following is a 581-amino-acid chain: Activating signal cointegrator 1 (581 aa).

An N-acetylalanine modification is found at alanine 2. The interval 100-121 (DQLKRSRRKGRNKQEVPAFPEP) is disordered. The C4-type zinc-finger motif lies at 167-219 (GRHPCDCLGQKHKLINNCLVCGRIVCEQEGSGPCLFCGSLVCTNEEQDILQRD). The tract at residues 200–300 (CLFCGSLVCT…ASDSNQWLSK (101 aa)) is mediates interaction with DDRGK1. Serine 276 carries the phosphoserine modification. Phosphotyrosine is present on tyrosine 289. Positions 300–400 (KVEREMLQKR…WVDNTGSTPQ (101 aa)) are mediates interaction with UFL1. Residues lysine 324 and lysine 334 each participate in a glycyl lysine isopeptide (Lys-Gly) (interchain with G-Cter in UFM1) cross-link. Over residues 390-406 (QWVDNTGSTPQKKTSLS) the composition is skewed to polar residues. The segment at 390–410 (QWVDNTGSTPQKKTSLSAGPR) is disordered. One can recognise an ASCH domain in the interval 437 to 531 (LSMHQPWASL…FQEQFPDISQ (95 aa)).

Interacts with the thyroid hormone receptor/TR (via the ligand-binding domain); this interaction requires the presence of thyroid hormone. Interacts with the androgen receptor/AR; in an androgen, testosterone and dihydrotestosterone-dependent manner. Interacts with ESR1 (estrogen ligand-bound); competes with UFSP2. Interacts with UFSP2; competes with ligand-bound ESR1. Interacts with DDRGK1 and UFL1; the interaction with DDRGK1 is direct. Interacts with NCOA1. Interacts with EP300. Part of the ASC-1 complex, that contains TRIP4, ASCC1, ASCC2 and ASCC3. Identified in the RQT (ribosome quality control trigger) complex, that contains ASCC2, ASCC3 and TRIP4. Interacts with NEK6. Interacts with CSRP1. Interacts with ZCCHC4. Phosphorylated by NEK6. In terms of processing, polyufmylated by the UFM1-conjugating system composed of the enzymes UBA5, UFC1 and UFL1. Deufmylated by the protease UFSP2. Ufmylation of TRIP4 is promoted by ligand-bound nuclear receptors that compete with UFSP2 for interaction with TRIP4. Nuclear receptors-induced ufmylation promotes the recruitment of additional transcriptional coactivators like EP300 and NCOA1 and therefore the assembly of a coactivator complex facilitating nuclear receptor-mediated transcription. In terms of tissue distribution, ubiquitously expressed. Expressed in the spinal cord, brain, paraspinal ganglia, thyroid, and submandibular glands. Expressed at low level in all the muscles (at protein level) but with higher expression in axial than in limb muscles.

It is found in the nucleus. The protein localises to the cytoplasm. Its subcellular location is the cytosol. It localises to the cytoskeleton. The protein resides in the microtubule organizing center. It is found in the centrosome. Functionally, transcription coactivator which associates with nuclear receptors, transcriptional coactivators including EP300, CREBBP and NCOA1, and basal transcription factors like TBP and TFIIA to facilitate nuclear receptors-mediated transcription. May thereby play an important role in establishing distinct coactivator complexes under different cellular conditions. Plays a role in thyroid hormone receptor and estrogen receptor transactivation. Also involved in androgen receptor transactivation. Plays a pivotal role in the transactivation of NF-kappa-B, SRF and AP1. Acts as a mediator of transrepression between nuclear receptor and either AP1 or NF-kappa-B. May play a role in the development of neuromuscular junction. May play a role in late myogenic differentiation. Also functions as part of the RQC trigger (RQT) complex that activates the ribosome quality control (RQC) pathway, a pathway that degrades nascent peptide chains during problematic translation. The sequence is that of Activating signal cointegrator 1 from Mus musculus (Mouse).